Reading from the N-terminus, the 214-residue chain is MIKVALPKGRLFEETVDLLLKRGIIEKRIEEGRKLILEEGGITFFLVKPSDVPVYVESGVSDLGVCGYDVYLEKKPSVYRLMDLGIGFCRIAVAGKPESEEKYFSSTHISVATKYPNIAYEFFKKKGVKADIYYLNGSVELAPLVGLSDFILDLVQTGRTLKENGLIVIEEVGKSTAWLIANKDSFRIKNGQIMEFLSRLVQHNKDGLQVQGSS.

Belongs to the ATP phosphoribosyltransferase family. Short subfamily. In terms of assembly, heteromultimer composed of HisG and HisZ subunits.

Its subcellular location is the cytoplasm. It carries out the reaction 1-(5-phospho-beta-D-ribosyl)-ATP + diphosphate = 5-phospho-alpha-D-ribose 1-diphosphate + ATP. It participates in amino-acid biosynthesis; L-histidine biosynthesis; L-histidine from 5-phospho-alpha-D-ribose 1-diphosphate: step 1/9. Functionally, catalyzes the condensation of ATP and 5-phosphoribose 1-diphosphate to form N'-(5'-phosphoribosyl)-ATP (PR-ATP). Has a crucial role in the pathway because the rate of histidine biosynthesis seems to be controlled primarily by regulation of HisG enzymatic activity. The protein is ATP phosphoribosyltransferase (hisG) of Aquifex aeolicus (strain VF5).